The primary structure comprises 480 residues: Sestrin-2 (480 aa).

Residue Met-1 is modified to N-acetylmethionine. The disordered stretch occupies residues 20–45; the sequence is PGGVGDSGPGEEQRESRARRGPRGPS. The N-terminal domain; mediates the alkylhydroperoxide reductase activity stretch occupies residues 66-239; the sequence is GLEALMSSGR…APTPPSEQSS (174 aa). The active-site Cysteine sulfenic acid (-SOH) intermediate is Cys-125. Lys-175 participates in a covalent cross-link: Glycyl lysine isopeptide (Lys-Gly) (interchain with G-Cter in ubiquitin). The disordered stretch occupies residues 222–252; that stretch reads ADGSPAPQAPTPPSEQSSPPSRDPLNNSGGF. At Ser-249 the chain carries Phosphoserine. The segment at 308 to 480 is C-terminal domain; mediates TORC1 regulation; it reads PHPDMLCFVE…ALRAITRYMT (173 aa). Residues 374–377, Thr-386, and Glu-451 each bind L-leucine; that span reads TYNT.

The protein belongs to the sestrin family. In terms of assembly, interacts with the GATOR2 complex which is composed of MIOS, SEC13, SEH1L, WDR24 and WDR59; the interaction is negatively regulated by leucine. Conveys leucine availability via direct interaction with SEH1L and WDR24 components of the GATOR2 complex. Interacts with RRAGA, RRAGB, RRAGC and RRAGD; may function as a guanine nucleotide dissociation inhibitor for RRAGs and regulate them. May interact with the TORC2 complex. Interacts with KEAP1, RBX1, SQSTM and ULK1; to regulate the degradation of KEAP1. May also associate with the complex composed of TSC1, TSC2 and the AMP-responsive protein kinase/AMPK to regulate TORC1 signaling. May interact with PRDX1. In terms of processing, phosphorylated by ULK1 at multiple sites. Ubiquitinated at Lys-175 by RNF167 via 'Lys-63'-linked polyubiquitination in response to leucine deprivation: ubiquitination promotes SESN2-interaction with the GATOR2 complex, leading to inhibit the TORC1 signaling pathway. Deubiquitinated at Lys-175 by STAMBPL1, promoting the TORC1 signaling pathway. Ubiquitinated by RNF186; ubiquitination mediates proteasomal degradation.

Its subcellular location is the cytoplasm. The enzyme catalyses a hydroperoxide + L-cysteinyl-[protein] = S-hydroxy-L-cysteinyl-[protein] + an alcohol. Its function is as follows. Functions as an intracellular leucine sensor that negatively regulates the mTORC1 signaling pathway through the GATOR complex. In absence of leucine, binds the GATOR subcomplex GATOR2 and prevents mTORC1 signaling. Binding of leucine to SESN2 disrupts its interaction with GATOR2 thereby activating the TORC1 signaling pathway. This stress-inducible metabolic regulator also plays a role in protection against oxidative and genotoxic stresses. May negatively regulate protein translation in response to endoplasmic reticulum stress, via mTORC1. May positively regulate the transcription by NFE2L2 of genes involved in the response to oxidative stress by facilitating the SQSTM1-mediated autophagic degradation of KEAP1. May also mediate TP53 inhibition of TORC1 signaling upon genotoxic stress. Moreover, may prevent the accumulation of reactive oxygen species (ROS) through the alkylhydroperoxide reductase activity born by the N-terminal domain of the protein. Was originally reported to contribute to oxidative stress resistance by reducing PRDX1. However, this could not be confirmed. This chain is Sestrin-2, found in Pongo abelii (Sumatran orangutan).